A 401-amino-acid chain; its full sequence is Lipoyl synthase 1, mitochondrial (401 aa).

The N-terminal 25 residues, 1 to 25 (MWSSSSSLCRNPSFRRAWLSTVTVT), are a transit peptide targeting the mitochondrion. A disordered region spans residues 49–79 (IDDFSSTNAPTTTTHYTSSNGSPIVRQKAAP). The segment covering 51–70 (DFSSTNAPTTTTHYTSSNGS) has biased composition (polar residues). Positions 117, 122, 128, 148, 152, 155, and 376 each coordinate [4Fe-4S] cluster. Residues 133–365 (EDQTATATIM…QETAMGMGFA (233 aa)) form the Radical SAM core domain.

It belongs to the radical SAM superfamily. Lipoyl synthase family. [4Fe-4S] cluster is required as a cofactor.

Its subcellular location is the mitochondrion. It carries out the reaction [[Fe-S] cluster scaffold protein carrying a second [4Fe-4S](2+) cluster] + N(6)-octanoyl-L-lysyl-[protein] + 2 oxidized [2Fe-2S]-[ferredoxin] + 2 S-adenosyl-L-methionine + 4 H(+) = [[Fe-S] cluster scaffold protein] + N(6)-[(R)-dihydrolipoyl]-L-lysyl-[protein] + 4 Fe(3+) + 2 hydrogen sulfide + 2 5'-deoxyadenosine + 2 L-methionine + 2 reduced [2Fe-2S]-[ferredoxin]. The protein operates within protein modification; protein lipoylation via endogenous pathway; protein N(6)-(lipoyl)lysine from octanoyl-[acyl-carrier-protein]: step 2/2. Its function is as follows. Catalyzes the radical-mediated insertion of two sulfur atoms into the C-6 and C-8 positions of the octanoyl moiety bound to the lipoyl domains of lipoate-dependent enzymes, thereby converting the octanoylated domains into lipoylated derivatives. This is Lipoyl synthase 1, mitochondrial from Phaeodactylum tricornutum (strain CCAP 1055/1).